The sequence spans 324 residues: Putative F-box/kelch-repeat protein At5g28160 (324 aa).

The 48-residue stretch at 7–54 (RPSFLSLPDEIILSCLARISRSYYPKLSLVCKTFRTLLISNELIVARL) folds into the F-box domain. Residues 170-216 (KIYVMGGCMADESVNWGEVFDIKTQTWEALPDPGPEFRFSSIRKIDV) form a Kelch repeat.

This is Putative F-box/kelch-repeat protein At5g28160 from Arabidopsis thaliana (Mouse-ear cress).